Consider the following 600-residue polypeptide: 1-deoxy-D-xylulose-5-phosphate synthase (600 aa).

Residues histidine 57 and 98–100 (GHA) contribute to the thiamine diphosphate site. Aspartate 125 is a Mg(2+) binding site. Residues 126 to 127 (AS), asparagine 155, tyrosine 264, and glutamate 343 each bind thiamine diphosphate. Asparagine 155 provides a ligand contact to Mg(2+).

Belongs to the transketolase family. DXPS subfamily. In terms of assembly, homodimer. Mg(2+) serves as cofactor. The cofactor is thiamine diphosphate.

It carries out the reaction D-glyceraldehyde 3-phosphate + pyruvate + H(+) = 1-deoxy-D-xylulose 5-phosphate + CO2. Its pathway is metabolic intermediate biosynthesis; 1-deoxy-D-xylulose 5-phosphate biosynthesis; 1-deoxy-D-xylulose 5-phosphate from D-glyceraldehyde 3-phosphate and pyruvate: step 1/1. Its function is as follows. Catalyzes the acyloin condensation reaction between C atoms 2 and 3 of pyruvate and glyceraldehyde 3-phosphate to yield 1-deoxy-D-xylulose-5-phosphate (DXP). The polypeptide is 1-deoxy-D-xylulose-5-phosphate synthase (Fusobacterium nucleatum subsp. nucleatum (strain ATCC 25586 / DSM 15643 / BCRC 10681 / CIP 101130 / JCM 8532 / KCTC 2640 / LMG 13131 / VPI 4355)).